The primary structure comprises 340 residues: Serpentine receptor class alpha-23 (340 aa).

Helical transmembrane passes span 34-54 (FIST…QALW), 114-136 (YFYY…DRLI), 150-170 (FIAI…FYIA), 199-219 (VRTV…YLSV), 250-270 (ILIV…NLLL), and 284-304 (VGAF…AIYF).

It belongs to the nematode receptor-like protein sra family.

It localises to the membrane. The protein is Serpentine receptor class alpha-23 (sra-23) of Caenorhabditis elegans.